We begin with the raw amino-acid sequence, 579 residues long: ATP-dependent lipid A-core flippase (579 aa).

5 helical membrane passes run 24–44 (FALSIVGLILTAATEPMLPAL), 63–83 (WVPLLLLGLFVLRGVASFIST), 150–170 (VLGLLGYLVWLNWRLTLIVFA), 251–271 (VIQFIAAIALAIIVFIAAGQA), and 275–295 (TTTVGGFVAFFMAMLLLFAPL). One can recognise an ABC transmembrane type-1 domain in the interval 25-307 (ALSIVGLILT…LTAVNDQLQR (283 aa)). Positions 339-575 (LAFRDVGLTY…QGRYAQLHAL (237 aa)) constitute an ABC transporter domain. 373–380 (GASGSGKT) is an ATP binding site.

This sequence belongs to the ABC transporter superfamily. Lipid exporter (TC 3.A.1.106) family. As to quaternary structure, homodimer.

It localises to the cell inner membrane. It carries out the reaction ATP + H2O + lipid A-core oligosaccharideSide 1 = ADP + phosphate + lipid A-core oligosaccharideSide 2.. Functionally, involved in lipopolysaccharide (LPS) biosynthesis. Translocates lipid A-core from the inner to the outer leaflet of the inner membrane. Transmembrane domains (TMD) form a pore in the inner membrane and the ATP-binding domain (NBD) is responsible for energy generation. This Thiobacillus denitrificans (strain ATCC 25259 / T1) protein is ATP-dependent lipid A-core flippase.